A 23-amino-acid polypeptide reads, in one-letter code: NLVQLGKMIFQETGKNPATSYGL.

The cofactor is Ca(2+). In terms of processing, contains 7 disulfide bonds. Expressed by the venom gland.

It is found in the secreted. The enzyme catalyses a 1,2-diacyl-sn-glycero-3-phosphocholine + H2O = a 1-acyl-sn-glycero-3-phosphocholine + a fatty acid + H(+). Its function is as follows. Snake venom phospholipase A2 (PLA2) that induces local edema a few hours after injection (5-10 ug) in the hind paw. PLA2 catalyzes the calcium-dependent hydrolysis of the 2-acyl groups in 3-sn-phosphoglycerides. The polypeptide is Basic phospholipase A2 CTs-G6 (Trimeresurus stejnegeri (Chinese green tree viper)).